Here is a 703-residue protein sequence, read N- to C-terminus: UvrABC system protein B (703 aa).

Residues 33–419 form the Helicase ATP-binding domain; sequence ERIENGENDV…SDGVVEQIIR (387 aa). 46 to 53 serves as a coordination point for ATP; the sequence is GATGTGKT. The Beta-hairpin signature appears at 99–122; sequence YYDYYQPEAYIPQTDTYIEKDSNI. The Helicase C-terminal domain occupies 436-589; that stretch reads QIDDLLAEIK…QIAYNQEHGI (154 aa). The 36-residue stretch at 659 to 694 folds into the UVR domain; the sequence is ADLIRQLSEQMHTAAEQLQFELAARLRDEIRDLKKE.

It belongs to the UvrB family. In terms of assembly, forms a heterotetramer with UvrA during the search for lesions. Interacts with UvrC in an incision complex.

It localises to the cytoplasm. In terms of biological role, the UvrABC repair system catalyzes the recognition and processing of DNA lesions. A damage recognition complex composed of 2 UvrA and 2 UvrB subunits scans DNA for abnormalities. Upon binding of the UvrA(2)B(2) complex to a putative damaged site, the DNA wraps around one UvrB monomer. DNA wrap is dependent on ATP binding by UvrB and probably causes local melting of the DNA helix, facilitating insertion of UvrB beta-hairpin between the DNA strands. Then UvrB probes one DNA strand for the presence of a lesion. If a lesion is found the UvrA subunits dissociate and the UvrB-DNA preincision complex is formed. This complex is subsequently bound by UvrC and the second UvrB is released. If no lesion is found, the DNA wraps around the other UvrB subunit that will check the other stand for damage. The sequence is that of UvrABC system protein B from Bifidobacterium longum (strain NCC 2705).